We begin with the raw amino-acid sequence, 96 residues long: MELRVIERTDTELRIEVAGEDHTFMNVIKGALLQTDGVAAATYDVNPEQSGGQTEPVLSIQTEPDADVDPLDALGDASRQVQTTVDDFTSAFTAAV.

It belongs to the archaeal Rpo11/eukaryotic RPB11/RPC19 RNA polymerase subunit family. Part of the RNA polymerase complex.

It is found in the cytoplasm. The catalysed reaction is RNA(n) + a ribonucleoside 5'-triphosphate = RNA(n+1) + diphosphate. Functionally, DNA-dependent RNA polymerase (RNAP) catalyzes the transcription of DNA into RNA using the four ribonucleoside triphosphates as substrates. The chain is DNA-directed RNA polymerase subunit Rpo11 from Haloquadratum walsbyi (strain DSM 16790 / HBSQ001).